A 349-amino-acid chain; its full sequence is Flap endonuclease 1 (349 aa).

Residues 1 to 98 (MDLGEIVEDV…EEIERRKRAK (98 aa)) are N-domain. Positions 27, 80, 152, 154, 173, 175, and 236 each coordinate Mg(2+). Positions 116–258 (EIRKYAQAAV…TALRIIKKYN (143 aa)) are I-domain. Residues 341–349 (KQTGLDQWF) form an interaction with PCNA region.

This sequence belongs to the XPG/RAD2 endonuclease family. FEN1 subfamily. As to quaternary structure, interacts with PCNA. PCNA stimulates the nuclease activity without altering cleavage specificity. Requires Mg(2+) as cofactor.

Its function is as follows. Structure-specific nuclease with 5'-flap endonuclease and 5'-3' exonuclease activities involved in DNA replication and repair. During DNA replication, cleaves the 5'-overhanging flap structure that is generated by displacement synthesis when DNA polymerase encounters the 5'-end of a downstream Okazaki fragment. Binds the unpaired 3'-DNA end and kinks the DNA to facilitate 5' cleavage specificity. Cleaves one nucleotide into the double-stranded DNA from the junction in flap DNA, leaving a nick for ligation. Also involved in the base excision repair (BER) pathway. Acts as a genome stabilization factor that prevents flaps from equilibrating into structures that lead to duplications and deletions. Also possesses 5'-3' exonuclease activity on nicked or gapped double-stranded DNA. The polypeptide is Flap endonuclease 1 (Sulfolobus acidocaldarius (strain ATCC 33909 / DSM 639 / JCM 8929 / NBRC 15157 / NCIMB 11770)).